Consider the following 319-residue polypeptide: Formimidoylglutamase (319 aa).

Mn(2+)-binding residues include N127, D150, H152, D154, D242, and D244.

It belongs to the arginase family. Requires Mn(2+) as cofactor.

The catalysed reaction is N-formimidoyl-L-glutamate + H2O = formamide + L-glutamate. It functions in the pathway amino-acid degradation; L-histidine degradation into L-glutamate; L-glutamate from N-formimidoyl-L-glutamate (hydrolase route): step 1/1. In terms of biological role, catalyzes the conversion of N-formimidoyl-L-glutamate to L-glutamate and formamide. This Bacillus subtilis (strain 168) protein is Formimidoylglutamase.